We begin with the raw amino-acid sequence, 357 residues long: Dual-specificity RNA methyltransferase RlmN (357 aa).

The Proton acceptor role is filled by Glu-89. Residues 109 to 340 (EGEKYTVCVS…CTIRESKALD (232 aa)) form the Radical SAM core domain. Cysteines 116 and 345 form a disulfide. [4Fe-4S] cluster contacts are provided by Cys-123, Cys-127, and Cys-130. S-adenosyl-L-methionine contacts are provided by residues 173–174 (GE), Ser-203, 226–228 (SLH), and Asn-302. The active-site S-methylcysteine intermediate is Cys-345.

Belongs to the radical SAM superfamily. RlmN family. [4Fe-4S] cluster serves as cofactor.

The protein resides in the cytoplasm. The catalysed reaction is adenosine(2503) in 23S rRNA + 2 reduced [2Fe-2S]-[ferredoxin] + 2 S-adenosyl-L-methionine = 2-methyladenosine(2503) in 23S rRNA + 5'-deoxyadenosine + L-methionine + 2 oxidized [2Fe-2S]-[ferredoxin] + S-adenosyl-L-homocysteine. It catalyses the reaction adenosine(37) in tRNA + 2 reduced [2Fe-2S]-[ferredoxin] + 2 S-adenosyl-L-methionine = 2-methyladenosine(37) in tRNA + 5'-deoxyadenosine + L-methionine + 2 oxidized [2Fe-2S]-[ferredoxin] + S-adenosyl-L-homocysteine. Functionally, specifically methylates position 2 of adenine 2503 in 23S rRNA and position 2 of adenine 37 in tRNAs. m2A2503 modification seems to play a crucial role in the proofreading step occurring at the peptidyl transferase center and thus would serve to optimize ribosomal fidelity. This chain is Dual-specificity RNA methyltransferase RlmN, found in Helicobacter pylori (strain P12).